We begin with the raw amino-acid sequence, 193 residues long: Ion-translocating oxidoreductase complex subunit A (193 aa).

A run of 6 helical transmembrane segments spans residues 4 to 24 (LALI…KFLG), 38 to 58 (AMGM…CSYL), 65 to 85 (APLG…AVVV), 102 to 122 (VLGI…VALL), 134 to 154 (AVYG…FAAL), and 171 to 191 (SVAL…AGLV).

Belongs to the NqrDE/RnfAE family. In terms of assembly, the complex is composed of six subunits: RnfA, RnfB, RnfC, RnfD, RnfE and RnfG.

Its subcellular location is the cell inner membrane. Its function is as follows. Part of a membrane-bound complex that couples electron transfer with translocation of ions across the membrane. The sequence is that of Ion-translocating oxidoreductase complex subunit A from Alkalilimnicola ehrlichii (strain ATCC BAA-1101 / DSM 17681 / MLHE-1).